The chain runs to 764 residues: Molybdenum cofactor sulfurase 3 (764 aa).

Position 228 is an N6-(pyridoxal phosphate)lysine (K228). Residue C394 is part of the active site. The 156-residue stretch at 607-762 folds into the MOSC domain; it reads LRLLKQSDEE…LYCNSVVEGL (156 aa).

Belongs to the class-V pyridoxal-phosphate-dependent aminotransferase family. MOCOS subfamily. Pyridoxal 5'-phosphate is required as a cofactor.

It carries out the reaction Mo-molybdopterin + L-cysteine + AH2 = thio-Mo-molybdopterin + L-alanine + A + H2O. Its function is as follows. Sulfurates the molybdenum cofactor. Sulfation of molybdenum is essential for xanthine dehydrogenase (XDH) and aldehyde oxidase (ADO) enzymes in which molybdenum cofactor is liganded by 1 oxygen and 1 sulfur atom in active form. This chain is Molybdenum cofactor sulfurase 3, found in Aedes aegypti (Yellowfever mosquito).